The sequence spans 294 residues: MKNNKVLVVVGPTAVGKTALGIDLAIKFNGEIISGDSQQVYQGLDIGTAKVTMAEQAQVPHHLIDVRKWTENFSVHDFVIEANQLIKEILDQGKVPIIVGGTGLYIQSLIEGYHLGGQENHEEMMKLREELSLLSDEELFAKVIKINPDISELNRRRAIRFLELQTFGSQDENLGSDYDFLLIGLNADRKVLYDRINQRVDQMMREGLLDEARTLYEQAPEVQAAKGIGYKEFFPYFSGDISLEEAVELVKRNSRRYAKRQLTWFKNRMSVEFEDVFSKNYPEPIFDKVTQFLN.

11 to 18 serves as a coordination point for ATP; sequence GPTAVGKT. Substrate is bound at residue 13-18; sequence TAVGKT. The segment at 36 to 39 is interaction with substrate tRNA; sequence DSQQ.

Belongs to the IPP transferase family. In terms of assembly, monomer. Requires Mg(2+) as cofactor.

It carries out the reaction adenosine(37) in tRNA + dimethylallyl diphosphate = N(6)-dimethylallyladenosine(37) in tRNA + diphosphate. Its function is as follows. Catalyzes the transfer of a dimethylallyl group onto the adenine at position 37 in tRNAs that read codons beginning with uridine, leading to the formation of N6-(dimethylallyl)adenosine (i(6)A). This is tRNA dimethylallyltransferase from Lactococcus lactis subsp. lactis (strain IL1403) (Streptococcus lactis).